Here is a 138-residue protein sequence, read N- to C-terminus: HTH-type transcriptional regulator CueR (138 aa).

The HTH merR-type domain maps to 1–69 (MNISDVAKKT…LEECGELVNL (69 aa)). Residues 4–23 (SDVAKKTGLTSKAIRFYEEK) constitute a DNA-binding region (H-T-H motif). Cu(+) is bound by residues C112 and C120.

Homodimer.

It localises to the cytoplasm. Functionally, regulates the transcription of the copA and cuiD (cueO) genes. Detects cytoplasmic copper stress and activates transcription in response to increasing copper concentrations. The sequence is that of HTH-type transcriptional regulator CueR (cueR) from Salmonella typhimurium (strain LT2 / SGSC1412 / ATCC 700720).